The chain runs to 428 residues: Pyruvate kinase (428 aa).

A substrate-binding site is contributed by arginine 34. Asparagine 36, serine 38, aspartate 68, and threonine 69 together coordinate K(+). 36 to 39 (NFSH) serves as a coordination point for ATP. Residues arginine 75 and lysine 152 each coordinate ATP. Position 214 (glutamate 214) interacts with Mg(2+). Residues glycine 237, aspartate 238, and threonine 270 each contribute to the substrate site. Mg(2+) is bound at residue aspartate 238.

The protein belongs to the pyruvate kinase family. As to quaternary structure, homotetramer. The cofactor is Mg(2+). It depends on K(+) as a cofactor.

It carries out the reaction pyruvate + ATP = phosphoenolpyruvate + ADP + H(+). Its pathway is carbohydrate degradation; glycolysis; pyruvate from D-glyceraldehyde 3-phosphate: step 5/5. The protein is Pyruvate kinase (PYK1) of Encephalitozoon cuniculi (strain GB-M1) (Microsporidian parasite).